A 484-amino-acid chain; its full sequence is ATP synthase subunit beta (484 aa).

Position 169–176 (169–176 (GGAGVGKT)) interacts with ATP.

The protein belongs to the ATPase alpha/beta chains family. F-type ATPases have 2 components, CF(1) - the catalytic core - and CF(0) - the membrane proton channel. CF(1) has five subunits: alpha(3), beta(3), gamma(1), delta(1), epsilon(1). CF(0) has three main subunits: a(1), b(2) and c(9-12). The alpha and beta chains form an alternating ring which encloses part of the gamma chain. CF(1) is attached to CF(0) by a central stalk formed by the gamma and epsilon chains, while a peripheral stalk is formed by the delta and b chains.

It is found in the cell membrane. It carries out the reaction ATP + H2O + 4 H(+)(in) = ADP + phosphate + 5 H(+)(out). Its function is as follows. Produces ATP from ADP in the presence of a proton gradient across the membrane. The catalytic sites are hosted primarily by the beta subunits. The sequence is that of ATP synthase subunit beta from Nocardioides sp. (strain ATCC BAA-499 / JS614).